Reading from the N-terminus, the 214-residue chain is Homeobox protein HEX homolog pha-2 (214 aa).

2 disordered regions span residues 1-50 (MDQK…QKME) and 180-214 (RRVRKDGEDEDEMPNGASARSLGQLQSSNPFLSHG). The segment covering 24-34 (SSESPIPTGSE) has biased composition (low complexity). Residues 35 to 44 (CSLNESSDTT) are compositionally biased toward polar residues. The homeobox DNA-binding region spans 124 to 183 (RKGGQIRFTNEQTDALEHKFDSHKYLSPQERKKLAKSLSLSERQVKTWFQNRRAKWRRVR). The span at 200–214 (SLGQLQSSNPFLSHG) shows a compositional bias: polar residues.

Its subcellular location is the nucleus. Transcriptional repressor. Involved in pharyngeal development and required for the formation of the pharyngeal isthmus. Plays a role in modulating cytoskeleton in the muscle cells of the isthmus. Regulates expression of the acetylcholinesterase genes ace-1 and ace-2. May regulate its own expression. This is Homeobox protein HEX homolog pha-2 from Caenorhabditis elegans.